A 461-amino-acid chain; its full sequence is Photosystem II CP43 reaction center protein (461 aa).

Positions 1 to 2 are excised as a propeptide; the sequence is ME. N-acetylthreonine is present on threonine 3. Phosphothreonine is present on threonine 3. The next 5 membrane-spanning stretches (helical) occupy residues 57–81, 122–143, 166–188, 243–263, and 279–300; these read LFEV…PHLA, LIGP…KDKN, KALY…RIIT, QPWA…LSYS, and WFNN…ASQS. Glutamate 355 lines the [CaMn4O5] cluster pocket. A helical membrane pass occupies residues 435–459; sequence RARAAAAGFEKGIDRFNEPTLSLRP.

The protein belongs to the PsbB/PsbC family. PsbC subfamily. As to quaternary structure, PSII is composed of 1 copy each of membrane proteins PsbA, PsbB, PsbC, PsbD, PsbE, PsbF, PsbH, PsbI, PsbJ, PsbK, PsbL, PsbM, PsbT, PsbX, PsbY, PsbZ, Psb30/Ycf12, at least 3 peripheral proteins of the oxygen-evolving complex and a large number of cofactors. It forms dimeric complexes. Requires Binds multiple chlorophylls and provides some of the ligands for the Ca-4Mn-5O cluster of the oxygen-evolving complex. It may also provide a ligand for a Cl- that is required for oxygen evolution. PSII binds additional chlorophylls, carotenoids and specific lipids. as cofactor.

The protein localises to the plastid. It localises to the chloroplast thylakoid membrane. Functionally, one of the components of the core complex of photosystem II (PSII). It binds chlorophyll and helps catalyze the primary light-induced photochemical processes of PSII. PSII is a light-driven water:plastoquinone oxidoreductase, using light energy to abstract electrons from H(2)O, generating O(2) and a proton gradient subsequently used for ATP formation. The sequence is that of Photosystem II CP43 reaction center protein from Oedogonium cardiacum (Filamentous green alga).